The following is a 204-amino-acid chain: MAAVILERLGALWVQNLRGKLALGILPQSHIHTSASLEISRKWEKKNKIVYPPQLPGEPRRPAEIYHCRRQIKYSKDKMWYLAKLIRGMSIDQALAQLEFSDKKGAQIIKEVLLEAQDMAVRDHNVEFRSNLYIAESTSGRGQYLKRIRYHGRGRFGIMEKVFCHYFVKLVEGPPPPPEAPKTAVTHAKEYIQELRNRTIIHAL.

The transit peptide at 1 to 38 directs the protein to the mitochondrion; sequence MAAVILERLGALWVQNLRGKLALGILPQSHIHTSASLE.

This sequence belongs to the universal ribosomal protein uL22 family. As to quaternary structure, component of the mitochondrial ribosome large subunit (39S) which comprises a 16S rRNA and about 50 distinct proteins.

The protein resides in the mitochondrion. This Bos taurus (Bovine) protein is Large ribosomal subunit protein uL22m (MRPL22).